The primary structure comprises 432 residues: Homogentisate 1,2-dioxygenase (432 aa).

Fe cation-binding residues include histidine 333, glutamate 339, and histidine 369.

It belongs to the homogentisate dioxygenase family. Requires Fe cation as cofactor.

It catalyses the reaction homogentisate + O2 = 4-maleylacetoacetate + H(+). It participates in amino-acid degradation; L-phenylalanine degradation; acetoacetate and fumarate from L-phenylalanine: step 4/6. The polypeptide is Homogentisate 1,2-dioxygenase (hgd) (Dictyostelium discoideum (Social amoeba)).